A 696-amino-acid chain; its full sequence is Elongation factor G (696 aa).

The tr-type G domain occupies 8–288 (EDYRNFGIMA…AVVEYLPSPA (281 aa)). GTP-binding positions include 17–24 (AHIDAGKT), 86–90 (DTPGH), and 140–143 (NKMD).

Belongs to the TRAFAC class translation factor GTPase superfamily. Classic translation factor GTPase family. EF-G/EF-2 subfamily.

It localises to the cytoplasm. In terms of biological role, catalyzes the GTP-dependent ribosomal translocation step during translation elongation. During this step, the ribosome changes from the pre-translocational (PRE) to the post-translocational (POST) state as the newly formed A-site-bound peptidyl-tRNA and P-site-bound deacylated tRNA move to the P and E sites, respectively. Catalyzes the coordinated movement of the two tRNA molecules, the mRNA and conformational changes in the ribosome. This is Elongation factor G from Mesorhizobium japonicum (strain LMG 29417 / CECT 9101 / MAFF 303099) (Mesorhizobium loti (strain MAFF 303099)).